Here is a 137-residue protein sequence, read N- to C-terminus: Type III secretion protein HrcQb (137 aa).

The span at 1-22 (MSTEDLYQDDVESLEDYDDETA) shows a compositional bias: acidic residues. A disordered region spans residues 1 to 67 (MSTEDLYQDD…EQQAPSGLDS (67 aa)). Basic and acidic residues predominate over residues 23 to 33 (EQEHEHEHEQQ). Over residues 36–58 (EPDDESEYAEAEPDDDEQEEQEE) the composition is skewed to acidic residues.

It belongs to the FliN/MopA/SpaO family. As to quaternary structure, homotetramer. The four monomers assemble into two tightly bound homodimers. Interacts with HrcQa.

It localises to the cytoplasm. Its function is as follows. Component of the type III secretion system, which is required for effector protein delivery, parasitism, and pathogenicity. Probably participates in the formation of a C-ring-like assembly along with HrcQa. The sequence is that of Type III secretion protein HrcQb (hrcQb) from Pseudomonas syringae pv. tomato (strain ATCC BAA-871 / DC3000).